The sequence spans 403 residues: Arginine deiminase (403 aa).

Cysteine 388 (amidino-cysteine intermediate) is an active-site residue.

Belongs to the arginine deiminase family.

It localises to the cytoplasm. The enzyme catalyses L-arginine + H2O = L-citrulline + NH4(+). It participates in amino-acid degradation; L-arginine degradation via ADI pathway; carbamoyl phosphate from L-arginine: step 1/2. The polypeptide is Arginine deiminase (Mycoplasma capricolum subsp. capricolum (strain California kid / ATCC 27343 / NCTC 10154)).